The primary structure comprises 341 residues: Mitochondrial transcription factor 1 (341 aa).

Leu-23, Glu-77, Asp-101, and Asn-137 together coordinate S-adenosyl-L-methionine.

It belongs to the class I-like SAM-binding methyltransferase superfamily. rRNA adenine N(6)-methyltransferase family.

Its subcellular location is the mitochondrion. Functionally, mitochondrial transcription factor that confers selective promoter recognition on the core subunit of the yeast mitochondrial RNA polymerase. Interacts with DNA in a non-specific manner. This is Mitochondrial transcription factor 1 (MTF1) from Saccharomyces paradoxus (Yeast).